We begin with the raw amino-acid sequence, 214 residues long: Probable transaldolase (214 aa).

Residue Lys83 is the Schiff-base intermediate with substrate of the active site.

The protein belongs to the transaldolase family. Type 3B subfamily.

Its subcellular location is the cytoplasm. The catalysed reaction is D-sedoheptulose 7-phosphate + D-glyceraldehyde 3-phosphate = D-erythrose 4-phosphate + beta-D-fructose 6-phosphate. It participates in carbohydrate degradation; pentose phosphate pathway; D-glyceraldehyde 3-phosphate and beta-D-fructose 6-phosphate from D-ribose 5-phosphate and D-xylulose 5-phosphate (non-oxidative stage): step 2/3. Functionally, transaldolase is important for the balance of metabolites in the pentose-phosphate pathway. The polypeptide is Probable transaldolase (Streptococcus pyogenes serotype M2 (strain MGAS10270)).